A 312-amino-acid polypeptide reads, in one-letter code: Olfactory receptor 6C70 (312 aa).

Residues 1–22 lie on the Extracellular side of the membrane; sequence MKNHTRQIEFILLGLTDNSQLQ. The N-linked (GlcNAc...) asparagine glycan is linked to N3. Residues 23–43 form a helical membrane-spanning segment; it reads IVIFLFLLLNCVLSMIGNFTI. Topologically, residues 44–63 are cytoplasmic; that stretch reads IALILLDSQLKTPMYFFLRN. A helical transmembrane segment spans residues 64–84; that stretch reads FSFLEISFTTACIPRFLITIV. The Extracellular segment spans residues 85–95; it reads TREKTISCNGC. C95 and C177 form a disulfide bridge. A helical transmembrane segment spans residues 96 to 116; it reads ISQLFFYIFLGVTEFFLLAAL. Over 117-141 the chain is Cytoplasmic; the sequence is SYDRYVAICKPLRYMSIMSNKVCYQ. Residues 142 to 162 traverse the membrane as a helical segment; the sequence is LVFSSWVTGFLIIFTPLILGL. At 163-194 the chain is on the extracellular side; it reads NLDFCASNIIDHFICDISLILQLSCSDTHLLE. The chain crosses the membrane as a helical span at residues 195-215; sequence LIAFLLAVMTLIVTLFLVILS. Over 216-237 the chain is Cytoplasmic; sequence YSYIIKTILKFPSAQQKKKAFS. A helical membrane pass occupies residues 238-258; sequence TCSSHMIVVSITYGSCMFIYI. Over 259 to 272 the chain is Extracellular; sequence KPSANERVALSKGV. The chain crosses the membrane as a helical span at residues 273 to 290; that stretch reads TVLNTSVAPLLNPFIYTL. At 291–312 the chain is on the cytoplasmic side; the sequence is RNQQVKQAFKAVFRKIFSASDK.

The protein belongs to the G-protein coupled receptor 1 family.

Its subcellular location is the cell membrane. Functionally, odorant receptor. The sequence is that of Olfactory receptor 6C70 (OR6C70) from Homo sapiens (Human).